We begin with the raw amino-acid sequence, 490 residues long: Cytochrome P450 71B28 (490 aa).

The chain crosses the membrane as a helical span at residues 1–21; that stretch reads MSVFLCFLCLLPLILIFLKNL. C440 contacts heme.

This sequence belongs to the cytochrome P450 family. Requires heme as cofactor.

The protein resides in the membrane. This chain is Cytochrome P450 71B28 (CYP71B28), found in Arabidopsis thaliana (Mouse-ear cress).